A 689-amino-acid polypeptide reads, in one-letter code: Bifunctional protein GAL10 (689 aa).

Residues 1–345 (MSYILVTGGA…TTKNPFGFQI (345 aa)) are galactowaldenase. 3-34 (YILVTGGAGYIGSHTVVELVNNGYNVVVVDNL) is an NAD(+) binding site. Positions 346–689 (NNYSWTKFDS…SYTIYRFENF (344 aa)) are mutarotase. The active-site For mutarotase activity is the His534.

This sequence in the N-terminal section; belongs to the NAD(P)-dependent epimerase/dehydratase family. The protein in the C-terminal section; belongs to the aldose epimerase family. NAD(+) serves as cofactor.

The catalysed reaction is UDP-alpha-D-glucose = UDP-alpha-D-galactose. The enzyme catalyses alpha-D-glucose = beta-D-glucose. The protein operates within carbohydrate metabolism; galactose metabolism. It participates in carbohydrate metabolism; hexose metabolism. Mutarotase converts alpha-aldose to the beta-anomer. It is active on D-glucose, L-arabinose, D-xylose, D-galactose, maltose and lactose. This Pachysolen tannophilus (Yeast) protein is Bifunctional protein GAL10 (GAL10).